Consider the following 283-residue polypeptide: Large ribosomal subunit protein uL2c (283 aa).

The segment at 229-274 (GVVMNPIDHPHGGGEGKVPIGRKKPLTPWGHPALGRKSRKRRKYSD) is disordered. Residues 262–271 (LGRKSRKRRK) show a composition bias toward basic residues.

This sequence belongs to the universal ribosomal protein uL2 family. In terms of assembly, part of the 50S ribosomal subunit.

Its subcellular location is the plastid. The polypeptide is Large ribosomal subunit protein uL2c (rpl2) (Aneura mirabilis (Parasitic liverwort)).